Reading from the N-terminus, the 792-residue chain is MNLQLTLISLLFFTSAIAETFKNLDSHPQFPCKPPHFSSYPFCNVSLSIKQRAISLVSLLMLPEKIGQLSNTAASVPRLGIPPYEWWSESLHGLADNGPGVSFNGSISAATSFPQVIVSAASFNRTLWYEIGSAVAVEGRAMYNGGQAGLTFWAPNINVFRDPRWGRGQETPGEDPKVVSEYGVEFVRGFQEKKKRKVLKRRFSDDVDDDRHDDDADGKLMLSACCKHFTAYDLEKWGNFTRYDFNAVVTEQDMEDTYQPPFETCIRDGKASCLMCSYNAVNGVPACAQGDLLQKARVEWGFEGYITSDCDAVATIFAYQGYTKSPEEAVADAIKAGVDINCGTYMLRHTQSAIEQGKVSEELVDRALLNLFAVQLRLGLFDGDPRRGQYGKLGSNDICSSDHRKLALEATRQGIVLLKNDHKLLPLNKNHVSSLAIVGPMANNISNMGGTYTGKPCQRKTLFTELLEYVKKTSYASGCSDVSCDSDTGFGEAVAIAKGADFVIVVAGLDLSQETEDKDRVSLSLPGKQKDLVSHVAAVSKKPVILVLTGGGPVDVTFAKNDPRIGSIIWIGYPGETGGQALAEIIFGDFNPGGRLPTTWYPESFTDVAMSDMHMRANSSRGYPGRTYRFYTGPQVYSFGTGLSYTKFEYKILSAPIRLSLSELLPQQSSHKKQLQHGEELRYLQLDDVIVNSCESLRFNVRVHVSNTGEIDGSHVVMLFSKMPPVLSGVPEKQLIGYDRVHVRSNEMMETVFVIDPCKQLSVANDVGKRVIPLGSHVLFLGDLQHSLSVEF.

The signal sequence occupies residues 1 to 18 (MNLQLTLISLLFFTSAIA). 4 N-linked (GlcNAc...) asparagine glycosylation sites follow: Asn44, Asn104, Asn124, and Asn239. Asp309 is an active-site residue. 2 N-linked (GlcNAc...) asparagine glycosylation sites follow: Asn444 and Asn618.

The protein belongs to the glycosyl hydrolase 3 family.

The protein localises to the secreted. Its subcellular location is the extracellular space. The protein resides in the extracellular matrix. The sequence is that of Probable beta-D-xylosidase 6 (BXL6) from Arabidopsis thaliana (Mouse-ear cress).